An 84-amino-acid chain; its full sequence is Large ribosomal subunit protein bL27 (84 aa).

The interval 1-22 (MAHKKAGGSTRNGRDSESKRLG) is disordered.

Belongs to the bacterial ribosomal protein bL27 family.

This is Large ribosomal subunit protein bL27 from Shewanella oneidensis (strain ATCC 700550 / JCM 31522 / CIP 106686 / LMG 19005 / NCIMB 14063 / MR-1).